Reading from the N-terminus, the 120-residue chain is Seminal plasma protein HSP-1 (120 aa).

2 repeat units span residues D1–V13 and D16–V28. Positions D1–V28 are 2 X approximate repeats. 4 O-linked (GalNAc...) threonine glycosylation sites follow: T5, T12, T22, and T27. Fibronectin type-II domains are found at residues T29 to A73 and T74 to C120. 4 disulfide bridges follow: C34–C58, C48–C71, C79–C105, and C93–C120.

Belongs to the seminal plasma protein family. As to quaternary structure, one glycoform exists as a monomer while the other forms a heterotetramer with HSP-2 and binds heparin. In terms of processing, O-glycosylated on Thr. There are two forms of HSP-1 which probably differ in the amount of sialylation of polysaccharide. As to expression, major component of seminal plasma.

It localises to the secreted. In terms of biological role, could enhance the fertilizing capacity of spermatozoa upon interaction with heparin-like glycosaminoglycans present in the female genital tract. This Equus caballus (Horse) protein is Seminal plasma protein HSP-1.